A 443-amino-acid chain; its full sequence is Anthocyanidin 3-O-glucoside 5-O-glucosyltransferase 2 (443 aa).

Residues 1-22 (MVRRRVLLATFPAQGHINPALQ) form the signal peptide. Histidine 16 serves as the catalytic Proton acceptor. Residue histidine 16 participates in an anthocyanidin binding. UDP-alpha-D-glucose contacts are provided by glutamine 340, histidine 355, tryptophan 358, asparagine 359, serine 360, glutamate 363, aspartate 379, and glutamine 380.

It belongs to the UDP-glycosyltransferase family.

The catalysed reaction is an anthocyanidin 3-O-beta-D-glucoside + UDP-alpha-D-glucose = an anthocyanidin 3,5-di-O-beta-D-glucoside + UDP + 2 H(+). It functions in the pathway pigment biosynthesis; anthocyanin biosynthesis. In terms of biological role, catalyzes the glucosylation at the O-5 position of anthocyanidin 3-glucosides to form anthocyanidin 3,5-di-O-glucosides using UDP-glucose as sugar donor. Anthocyanidin 3,5-di-O-glucosides are molecules that are responsible for pigmentation. Also acts on anthocyanidin 3-O-(6-O-malonylglucoside). Much less active with hydroxycinnamoylglucose derivatives. No activity in the absence of the 3-O-glucoside group. This is Anthocyanidin 3-O-glucoside 5-O-glucosyltransferase 2 (PF3R6) from Perilla frutescens (Beefsteak mint).